Consider the following 568-residue polypeptide: Periplasmic trehalase (568 aa).

Positions 1-39 are cleaved as a signal peptide; the sequence is MPHVVARSGDVMSSAAPPSCTSLLGLSLSMFVAPCTLTA. Substrate contacts are provided by residues Arg169, 176-177, Asn213, 222-224, 294-296, and Gly327; these read WD, RSQ, and RPE. Catalysis depends on proton donor/acceptor residues Asp329 and Glu511. Glu526 provides a ligand contact to substrate.

Belongs to the glycosyl hydrolase 37 family.

It is found in the periplasm. The catalysed reaction is alpha,alpha-trehalose + H2O = alpha-D-glucose + beta-D-glucose. Its function is as follows. Provides the cells with the ability to utilize trehalose at high osmolarity by splitting it into glucose molecules that can subsequently be taken up by the phosphotransferase-mediated uptake system. The sequence is that of Periplasmic trehalase from Xanthomonas oryzae pv. oryzae (strain MAFF 311018).